The chain runs to 186 residues: UPF0301 protein NTHI0415 (186 aa).

The protein belongs to the UPF0301 (AlgH) family.

The sequence is that of UPF0301 protein NTHI0415 from Haemophilus influenzae (strain 86-028NP).